We begin with the raw amino-acid sequence, 98 residues long: Citrate lyase acyl carrier protein (98 aa).

Position 14 is an O-(phosphoribosyl dephospho-coenzyme A)serine (S14).

Belongs to the CitD family. As to quaternary structure, oligomer with a subunit composition of (alpha,beta,gamma)6.

Its subcellular location is the cytoplasm. Covalent carrier of the coenzyme of citrate lyase. This Escherichia coli O81 (strain ED1a) protein is Citrate lyase acyl carrier protein.